The primary structure comprises 786 residues: Probable aminopeptidase 1 (786 aa).

Substrate is bound by residues glutamate 103 and glycine 235–asparagine 239. Histidine 270 contributes to the Zn(2+) binding site. Residue glutamate 271 is the Proton acceptor of the active site. Zn(2+)-binding residues include histidine 274 and glutamate 293.

Belongs to the peptidase M1 family. Zn(2+) serves as cofactor.

The protein resides in the cytoplasm. This is Probable aminopeptidase 1 (ape1) from Sulfurisphaera tokodaii (strain DSM 16993 / JCM 10545 / NBRC 100140 / 7) (Sulfolobus tokodaii).